A 143-amino-acid chain; its full sequence is S-adenosylmethionine decarboxylase proenzyme (143 aa).

Ser66 acts as the Schiff-base intermediate with substrate; via pyruvic acid in catalysis. The residue at position 66 (Ser66) is a Pyruvic acid (Ser); by autocatalysis. Residue His71 is the Proton acceptor; for processing activity of the active site. Cys86 functions as the Proton donor; for catalytic activity in the catalytic mechanism.

Belongs to the prokaryotic AdoMetDC family. Type 1 subfamily. Heterotetramer of two alpha and two beta chains arranged as a dimer of alpha/beta heterodimers. Pyruvate is required as a cofactor. Post-translationally, is synthesized initially as an inactive proenzyme. Formation of the active enzyme involves a self-maturation process in which the active site pyruvoyl group is generated from an internal serine residue via an autocatalytic post-translational modification. Two non-identical subunits are generated from the proenzyme in this reaction, and the pyruvate is formed at the N-terminus of the alpha chain, which is derived from the carboxyl end of the proenzyme. The post-translation cleavage follows an unusual pathway, termed non-hydrolytic serinolysis, in which the side chain hydroxyl group of the serine supplies its oxygen atom to form the C-terminus of the beta chain, while the remainder of the serine residue undergoes an oxidative deamination to produce ammonia and the pyruvoyl group blocking the N-terminus of the alpha chain.

The enzyme catalyses S-adenosyl-L-methionine + H(+) = S-adenosyl 3-(methylsulfanyl)propylamine + CO2. Its pathway is amine and polyamine biosynthesis; S-adenosylmethioninamine biosynthesis; S-adenosylmethioninamine from S-adenosyl-L-methionine: step 1/1. In terms of biological role, catalyzes the decarboxylation of S-adenosylmethionine to S-adenosylmethioninamine (dcAdoMet), the propylamine donor required for the synthesis of the polyamines spermine and spermidine from the diamine putrescine. This Thermococcus gammatolerans (strain DSM 15229 / JCM 11827 / EJ3) protein is S-adenosylmethionine decarboxylase proenzyme.